The chain runs to 147 residues: RxLR effector protein Avr3a (147 aa).

The first 21 residues, 1–21, serve as a signal peptide directing secretion; it reads MRLAIMLSATAVAINFATSSA. The RxLR-dEER motif lies at 44–59; it reads RLLRKNEENEETSEER. Lysine 48 carries the N6-acetyllysine modification. The tract at residues 77–147 is effector domain; it reads ALTERADAKK…YMMHLGLTGY (71 aa).

It belongs to the RxLR effector family. As to quaternary structure, forms homodimers via the RxLR-dEER motif. Interacts with host E3 ligase CMPG1. Interacts with host DRP2. Post-translationally, proteolytically cleaved. The cleavage site directly after the RxLR sequence and the high conservation among other effector proteins suggest that the RxLR motif might play a crucial role in the intracellular processing before secretion. In terms of processing, glycosylated. N-acetylated at Lys-48 after cleavage.

Its subcellular location is the secreted. It is found in the host cytoplasm. In terms of biological role, multifunctional effector that can suppress host BAK1/SERK3-mediated immunity through at least two different pathways. Manipulates plant immunity by targeting and stabilizing host E3 ligase CMPG1. Preventing the normal 26S proteasome-dependent degradation of potato CMPG1, and thus potentially of its protein substrates in the host cell, further abolishes host cell death during the biotrophic phase of infection. Also associates with and affects the function of the dynamin-related protein 2 (DRP2), a plant GTPase involved in immune receptor-mediated endocytosis. The Avr3a(EM) form evades recognition by R3a, thus does not trigger R3a-mediated hypersensitivity and does not suppress INF1-induced cell death. This is RxLR effector protein Avr3a from Phytophthora infestans (Potato late blight agent).